The sequence spans 450 residues: MSTHVTFDYSKALSFIGEHEITYLRDAVKVTHHAIHEKTGAGNDFLGWVDLPLQYDKEEFARIQKCAEKIKNDSDILLVVGIGGSYLGARAAIEMLNHSFYNTLSKEQRKTPQVLFVGQNISSTYMKDLMDVLEGKDFSINVISKSGTTTEPALAFRIFRKLLEEKYGKEEARKRIYATTDKARGALKTLADNEGYETFVIPDDVGGRFSVLTPVGLLPIAVSGLNIEEMMKGAAAGHDDFGTSELEENPAYQYAVVRNALYNKGKTIEMLVNYEPALQYFAEWWKQLFGESEGKDQKGIFPSSANFSTDLHSLGQYVQEGRRDLFETVLKVGKSTHELTIESEENDLDGLNYLAGETVDFVNTKAYEGTLLAHSDGGVPNLIVNIPELNEYTFGYLVYFFEKACAMSGYLLGVNPFDQPGVEAYKKNMFALLGKPGFEELKAELEERLK.

Thr39 bears the Phosphothreonine mark. Glu291 functions as the Proton donor in the catalytic mechanism. Catalysis depends on residues His312 and Lys426.

It belongs to the GPI family.

The protein resides in the cytoplasm. It catalyses the reaction alpha-D-glucose 6-phosphate = beta-D-fructose 6-phosphate. Its pathway is carbohydrate biosynthesis; gluconeogenesis. It functions in the pathway carbohydrate degradation; glycolysis; D-glyceraldehyde 3-phosphate and glycerone phosphate from D-glucose: step 2/4. Functionally, catalyzes the reversible isomerization of glucose-6-phosphate to fructose-6-phosphate. The chain is Glucose-6-phosphate isomerase from Bacillus cereus (strain G9842).